The chain runs to 85 residues: Large ribosomal subunit protein bL27 (85 aa).

The interval 1–21 is disordered; it reads MAHKKAGGSTRNGRDSRGKRL.

It belongs to the bacterial ribosomal protein bL27 family.

This chain is Large ribosomal subunit protein bL27, found in Blochmanniella floridana.